The chain runs to 140 residues: Nucleoside diphosphate kinase (140 aa).

ATP-binding residues include Lys11, Phe59, Arg87, Thr93, Arg104, and Asn114. His117 functions as the Pros-phosphohistidine intermediate in the catalytic mechanism.

The protein belongs to the NDK family. Homotetramer. The cofactor is Mg(2+).

The protein resides in the cytoplasm. It carries out the reaction a 2'-deoxyribonucleoside 5'-diphosphate + ATP = a 2'-deoxyribonucleoside 5'-triphosphate + ADP. It catalyses the reaction a ribonucleoside 5'-diphosphate + ATP = a ribonucleoside 5'-triphosphate + ADP. Functionally, major role in the synthesis of nucleoside triphosphates other than ATP. The ATP gamma phosphate is transferred to the NDP beta phosphate via a ping-pong mechanism, using a phosphorylated active-site intermediate. This Rickettsia akari (strain Hartford) protein is Nucleoside diphosphate kinase.